Consider the following 557-residue polypeptide: Dihydroxy-acid dehydratase (557 aa).

Residue cysteine 49 participates in [2Fe-2S] cluster binding. Aspartate 81 contributes to the Mg(2+) binding site. Residue cysteine 122 participates in [2Fe-2S] cluster binding. Mg(2+) contacts are provided by aspartate 123 and lysine 124. Lysine 124 carries the N6-carboxylysine modification. A [2Fe-2S] cluster-binding site is contributed by cysteine 194. Glutamate 446 provides a ligand contact to Mg(2+). The active-site Proton acceptor is serine 472.

The protein belongs to the IlvD/Edd family. In terms of assembly, homodimer. [2Fe-2S] cluster serves as cofactor. Requires Mg(2+) as cofactor.

The enzyme catalyses (2R)-2,3-dihydroxy-3-methylbutanoate = 3-methyl-2-oxobutanoate + H2O. The catalysed reaction is (2R,3R)-2,3-dihydroxy-3-methylpentanoate = (S)-3-methyl-2-oxopentanoate + H2O. It functions in the pathway amino-acid biosynthesis; L-isoleucine biosynthesis; L-isoleucine from 2-oxobutanoate: step 3/4. It participates in amino-acid biosynthesis; L-valine biosynthesis; L-valine from pyruvate: step 3/4. Functions in the biosynthesis of branched-chain amino acids. Catalyzes the dehydration of (2R,3R)-2,3-dihydroxy-3-methylpentanoate (2,3-dihydroxy-3-methylvalerate) into 2-oxo-3-methylpentanoate (2-oxo-3-methylvalerate) and of (2R)-2,3-dihydroxy-3-methylbutanoate (2,3-dihydroxyisovalerate) into 2-oxo-3-methylbutanoate (2-oxoisovalerate), the penultimate precursor to L-isoleucine and L-valine, respectively. The chain is Dihydroxy-acid dehydratase from Prochlorococcus marinus (strain MIT 9215).